A 1124-amino-acid polypeptide reads, in one-letter code: Phytochrome A (1124 aa).

Positions 1–19 (MSTTRPSQSSNNSGRSRNS) are enriched in low complexity. Residues 1–21 (MSTTRPSQSSNNSGRSRNSAR) form a disordered region. Residues 218-401 (SMERLCDTMV…VFAIHVNKEI (184 aa)) enclose the GAF domain. Residue Cys-323 coordinates phytochromobilin. 2 consecutive PAS domains span residues 617–687 (VTSE…LQGE) and 750–821 (DYKA…VNFG). The region spanning 901–1120 (YMKRQIRNPL…ILSVELAAAH (220 aa)) is the Histidine kinase domain.

This sequence belongs to the phytochrome family. In terms of assembly, homodimer. Contains one covalently linked phytochromobilin chromophore.

Its function is as follows. Regulatory photoreceptor which exists in two forms that are reversibly interconvertible by light: the Pr form that absorbs maximally in the red region of the spectrum and the Pfr form that absorbs maximally in the far-red region. Photoconversion of Pr to Pfr induces an array of morphogenic responses, whereas reconversion of Pfr to Pr cancels the induction of those responses. Pfr controls the expression of a number of nuclear genes including those encoding the small subunit of ribulose-bisphosphate carboxylase, chlorophyll A/B binding protein, protochlorophyllide reductase, rRNA, etc. It also controls the expression of its own gene(s) in a negative feedback fashion. The protein is Phytochrome A (PHYA) of Pisum sativum (Garden pea).